Consider the following 239-residue polypeptide: Norbelladine 4'-O-methyltransferase (239 aa).

Residues V55, E77, 79–80, S85, D103, and A132 contribute to the S-adenosyl-L-methionine site; that span reads GV. Position 155 (D155) interacts with a divalent metal cation. D157 is an S-adenosyl-L-methionine binding site. Residues D181 and N182 each contribute to the a divalent metal cation site.

This sequence belongs to the class I-like SAM-binding methyltransferase superfamily. Cation-dependent O-methyltransferase family. It depends on Mg(2+) as a cofactor. Mostly expressed in bulbs, and, to a lower extent, in stems and roots.

It catalyses the reaction norbelladine + S-adenosyl-L-methionine = 4'-O-methylnorbelladine + S-adenosyl-L-homocysteine + H(+). It functions in the pathway alkaloid biosynthesis. Functionally, 4'-O-methyltransferase converting norbelladine to 4'-O-methylnorbelladine. 4'-O-methylnorbelladine is a precursor to all Amaryllidaceae alkaloids such as galanthamine, lycorine and haemanthamine, and including haemanthamine- and crinamine-type alkaloids, promising anticancer agents. This is Norbelladine 4'-O-methyltransferase from Narcissus pseudonarcissus (Daffodil).